The sequence spans 137 residues: Nucleoside diphosphate kinase (137 aa).

ATP is bound by residues lysine 9, phenylalanine 57, arginine 85, threonine 91, arginine 102, and asparagine 112. Residue histidine 115 is the Pros-phosphohistidine intermediate of the active site.

The protein belongs to the NDK family. As to quaternary structure, homotetramer. The cofactor is Mg(2+).

Its subcellular location is the cytoplasm. It carries out the reaction a 2'-deoxyribonucleoside 5'-diphosphate + ATP = a 2'-deoxyribonucleoside 5'-triphosphate + ADP. The catalysed reaction is a ribonucleoside 5'-diphosphate + ATP = a ribonucleoside 5'-triphosphate + ADP. Functionally, major role in the synthesis of nucleoside triphosphates other than ATP. The ATP gamma phosphate is transferred to the NDP beta phosphate via a ping-pong mechanism, using a phosphorylated active-site intermediate. This chain is Nucleoside diphosphate kinase, found in Leptospira interrogans serogroup Icterohaemorrhagiae serovar Lai (strain 56601).